A 120-amino-acid polypeptide reads, in one-letter code: Small ribosomal subunit protein bS16 (120 aa).

The tract at residues 81–120 (GLAKRPARNNPQKAEPGEKSKERAAKRAEKAAAPAEDAAA) is disordered. Positions 95–110 (EPGEKSKERAAKRAEK) are enriched in basic and acidic residues. Residues 111-120 (AAAPAEDAAA) are compositionally biased toward low complexity.

This sequence belongs to the bacterial ribosomal protein bS16 family.

The polypeptide is Small ribosomal subunit protein bS16 (Methylorubrum populi (strain ATCC BAA-705 / NCIMB 13946 / BJ001) (Methylobacterium populi)).